The primary structure comprises 65 residues: ITYTDCTESGQDLCLCEGSDVCGKGNKCILGSNGEENQCVTGEGTPKPQSHNDGDFEEIPEEYLQ.

Residues 1–3 form an interaction with thrombin active site region; sequence ITY. Intrachain disulfides connect Cys-6/Cys-14, Cys-16/Cys-28, and Cys-22/Cys-39. Residues 39-65 are disordered; it reads CVTGEGTPKPQSHNDGDFEEIPEEYLQ. Thr-45 is a glycosylation site (O-linked (GalNAc...) threonine). An interaction with fibrinogen-binding exosite of thrombin region spans residues 55–65; it reads DFEEIPEEYLQ. A compositionally biased stretch (acidic residues) spans 55–65; the sequence is DFEEIPEEYLQ. Tyr-63 bears the Sulfotyrosine mark.

The protein belongs to the protease inhibitor I14 (hirudin) family.

Its subcellular location is the secreted. Its function is as follows. Hirudin is a potent thrombin-specific protease inhibitor. It forms a stable non-covalent complex with alpha-thrombin, thereby abolishing its ability to cleave fibrinogen. This Hirudo medicinalis (Medicinal leech) protein is Hirudin-2'.